The sequence spans 525 residues: Glutamate--cysteine ligase (525 aa).

This sequence belongs to the glutamate--cysteine ligase type 1 family. Type 1 subfamily.

The catalysed reaction is L-cysteine + L-glutamate + ATP = gamma-L-glutamyl-L-cysteine + ADP + phosphate + H(+). The protein operates within sulfur metabolism; glutathione biosynthesis; glutathione from L-cysteine and L-glutamate: step 1/2. The protein is Glutamate--cysteine ligase of Vibrio vulnificus (strain YJ016).